Consider the following 240-residue polypeptide: 4-hydroxy-tetrahydrodipicolinate reductase (240 aa).

Residues 79–81 and 103–106 each bind NAD(+); these read ATT and SANM. His135 acts as the Proton donor/acceptor in catalysis. A (S)-2,3,4,5-tetrahydrodipicolinate-binding site is contributed by His136. Lys139 acts as the Proton donor in catalysis. 145-146 is a (S)-2,3,4,5-tetrahydrodipicolinate binding site; that stretch reads GT.

This sequence belongs to the DapB family.

The protein localises to the cytoplasm. The catalysed reaction is (S)-2,3,4,5-tetrahydrodipicolinate + NAD(+) + H2O = (2S,4S)-4-hydroxy-2,3,4,5-tetrahydrodipicolinate + NADH + H(+). It catalyses the reaction (S)-2,3,4,5-tetrahydrodipicolinate + NADP(+) + H2O = (2S,4S)-4-hydroxy-2,3,4,5-tetrahydrodipicolinate + NADPH + H(+). It participates in amino-acid biosynthesis; L-lysine biosynthesis via DAP pathway; (S)-tetrahydrodipicolinate from L-aspartate: step 4/4. In terms of biological role, catalyzes the conversion of 4-hydroxy-tetrahydrodipicolinate (HTPA) to tetrahydrodipicolinate. This Staphylococcus saprophyticus subsp. saprophyticus (strain ATCC 15305 / DSM 20229 / NCIMB 8711 / NCTC 7292 / S-41) protein is 4-hydroxy-tetrahydrodipicolinate reductase.